Reading from the N-terminus, the 853-residue chain is DNA mismatch repair protein MutS (853 aa).

614 to 621 (GPNMGGKS) lines the ATP pocket.

Belongs to the DNA mismatch repair MutS family.

Functionally, this protein is involved in the repair of mismatches in DNA. It is possible that it carries out the mismatch recognition step. This protein has a weak ATPase activity. This is DNA mismatch repair protein MutS from Shigella flexneri serotype 5b (strain 8401).